A 360-amino-acid chain; its full sequence is Photosystem II protein D1 (360 aa).

The next 3 helical transmembrane spans lie at 30–47 (YVGW…AATT), 119–134 (HFLI…QWEL), and 143–157 (WICV…AAFA). His-119 lines the chlorophyll a pocket. Tyr-127 serves as a coordination point for pheophytin a. The [CaMn4O5] cluster site is built by Asp-171 and Glu-190. Residues 198–219 (FHMAGVAGMFGGALFSAMHGSL) traverse the membrane as a helical segment. His-199 is a chlorophyll a binding site. A quinone contacts are provided by residues His-216 and 265 to 266 (SF). Position 216 (His-216) interacts with Fe cation. His-273 is a binding site for Fe cation. A helical transmembrane segment spans residues 275–289 (FLASWPVICVWLTSM). [CaMn4O5] cluster-binding residues include His-333, Glu-334, Asp-343, and Ala-345. The propeptide occupies 346–360 (AAESTSVALVAPAIG).

This sequence belongs to the reaction center PufL/M/PsbA/D family. PSII is composed of 1 copy each of membrane proteins PsbA, PsbB, PsbC, PsbD, PsbE, PsbF, PsbH, PsbI, PsbJ, PsbK, PsbL, PsbM, PsbT, PsbX, PsbY, Psb30/Ycf12, peripheral proteins PsbO, CyanoQ (PsbQ), PsbU, PsbV and a large number of cofactors. It forms dimeric complexes. The D1/D2 heterodimer binds P680, chlorophylls that are the primary electron donor of PSII, and subsequent electron acceptors. It shares a non-heme iron and each subunit binds pheophytin, quinone, additional chlorophylls, carotenoids and lipids. D1 provides most of the ligands for the Mn4-Ca-O5 cluster of the oxygen-evolving complex (OEC). There is also a Cl(-1) ion associated with D1 and D2, which is required for oxygen evolution. The PSII complex binds additional chlorophylls, carotenoids and specific lipids. serves as cofactor. Tyr-162 forms a radical intermediate that is referred to as redox-active TyrZ, YZ or Y-Z. Post-translationally, C-terminally processed by CtpA; processing is essential to allow assembly of the oxygen-evolving complex and thus photosynthetic growth.

It is found in the cellular thylakoid membrane. It catalyses the reaction 2 a plastoquinone + 4 hnu + 2 H2O = 2 a plastoquinol + O2. In terms of biological role, photosystem II (PSII) is a light-driven water:plastoquinone oxidoreductase that uses light energy to abstract electrons from H(2)O, generating O(2) and a proton gradient subsequently used for ATP formation. It consists of a core antenna complex that captures photons, and an electron transfer chain that converts photonic excitation into a charge separation. The D1/D2 (PsbA/PsbD) reaction center heterodimer binds P680, the primary electron donor of PSII as well as several subsequent electron acceptors. In Prochlorococcus marinus (strain NATL1A), this protein is Photosystem II protein D1.